The following is a 54-amino-acid chain: Photoreceptor disk component PRCD (54 aa).

Cys-2 carries the S-palmitoyl cysteine lipid modification. The interval 25–54 (PEPSDVDGAARGSSLDADPQSSGREKEPLK) is disordered.

The protein belongs to the PRCD family. In terms of assembly, interacts with RHO/rhodopsin; the interaction promotes PRCD stability. In terms of processing, palmitoylated at Cys-2. Palmitoylation is essential for protein stability and trafficking to the photoreceptor outer segment, but does not appear to be essential for membrane localization. Probably palmitoylated by ZDHHC3. Post-translationally, phosphorylated.

The protein resides in the cell projection. The protein localises to the cilium. It is found in the photoreceptor outer segment. It localises to the membrane. Its subcellular location is the endoplasmic reticulum. The protein resides in the golgi apparatus. In terms of biological role, involved in vision. The protein is Photoreceptor disk component PRCD of Homo sapiens (Human).